Here is a 122-residue protein sequence, read N- to C-terminus: Large ribosomal subunit protein uL14 (122 aa).

Belongs to the universal ribosomal protein uL14 family. As to quaternary structure, part of the 50S ribosomal subunit. Forms a cluster with proteins L3 and L19. In the 70S ribosome, L14 and L19 interact and together make contacts with the 16S rRNA in bridges B5 and B8.

Functionally, binds to 23S rRNA. Forms part of two intersubunit bridges in the 70S ribosome. This Streptococcus pyogenes serotype M2 (strain MGAS10270) protein is Large ribosomal subunit protein uL14.